The primary structure comprises 122 residues: Nuclear transport factor 2A (122 aa).

M1 is subject to N-acetylmethionine. In terms of domain architecture, NTF2 spans 6 to 119 (VAKAFVEHYY…YYVFNDIFRL (114 aa)).

As to quaternary structure, interacts with RAN1. As to expression, expressed in roots, stems, leaves and flowers, and, at low levels, in siliques.

The protein localises to the cytoplasm. The protein resides in the nucleus. It is found in the nucleus envelope. Its function is as follows. Facilitates protein transport into the nucleus. Interacts with various nucleoporins and with Ran-GDP. Could be part of a multicomponent system of cytosolic factors that assemble at the pore complex during nuclear import. The sequence is that of Nuclear transport factor 2A from Arabidopsis thaliana (Mouse-ear cress).